The sequence spans 482 residues: Dual specificity protein phosphatase 10 (482 aa).

Residues 168–285 (PSQGPVIIDC…FKQNHENLCD (118 aa)) enclose the Rhodanese domain. Positions 199–215 (KISRRRLQQGKITVLDL) are interaction with MAP kinases. The Tyrosine-protein phosphatase domain occupies 321–464 (ELTPILPFLF…LLEFEEDLNN (144 aa)). Cysteine 408 serves as the catalytic Phosphocysteine intermediate.

This sequence belongs to the protein-tyrosine phosphatase family. Non-receptor class dual specificity subfamily. In terms of assembly, monomer. Interacts with MAPK14.

The protein resides in the cytoplasm. It is found in the nucleus. The enzyme catalyses O-phospho-L-tyrosyl-[protein] + H2O = L-tyrosyl-[protein] + phosphate. The catalysed reaction is O-phospho-L-seryl-[protein] + H2O = L-seryl-[protein] + phosphate. It catalyses the reaction O-phospho-L-threonyl-[protein] + H2O = L-threonyl-[protein] + phosphate. Its function is as follows. Protein phosphatase involved in the inactivation of MAP kinases. Has a specificity for the MAPK11/MAPK12/MAPK13/MAPK14 subfamily. It preferably dephosphorylates p38. The polypeptide is Dual specificity protein phosphatase 10 (DUSP10) (Bos taurus (Bovine)).